The following is a 214-amino-acid chain: Large ribosomal subunit protein uL2my, C-terminal part (214 aa).

The transit peptide at 1 to 30 directs the protein to the mitochondrion; it reads MSGLVALCRARASASSSLFNSVIRPAFRNF. Residues 157–214 form a disordered region; sequence VAMNPCDHPHGGGEGKSKSSGSRGRTSVSPWGKPCKGGYKSASVKKKKKRLAEAAAKM. Over residues 163 to 173 the composition is skewed to basic and acidic residues; that stretch reads DHPHGGGEGKS. The segment covering 174–185 has biased composition (low complexity); sequence KSSGSRGRTSVS.

Belongs to the universal ribosomal protein uL2 family. In terms of assembly, component of the mitochondrial ribosome large subunit.

The protein localises to the mitochondrion. This is Large ribosomal subunit protein uL2my, C-terminal part from Arabidopsis thaliana (Mouse-ear cress).